The sequence spans 473 residues: Gamma-aminobutyric acid receptor subunit beta-3 (473 aa).

A signal peptide spans 1-25 (MWGFAGGRLFGIFSAPVLVAVVCCA). Residues 26-246 (QSVNDPGNMS…FRLKRNIGYF (221 aa)) lie on the Extracellular side of the membrane. Residues asparagine 33 and asparagine 105 are each glycosylated (N-linked (GlcNAc...) asparagine). Tyrosine 122 lines the histamine pocket. A disulfide bridge links cysteine 161 with cysteine 175. Asparagine 174 carries an N-linked (GlcNAc...) asparagine glycan. Glutamate 180, tyrosine 182, and threonine 227 together coordinate 4-aminobutanoate. Residues 181 to 182 (SY) and threonine 227 each bind histamine. The chain crosses the membrane as a helical span at residues 247 to 267 (ILQTYMPSILITILSWVSFWI). The Cytoplasmic segment spans residues 268-271 (NYDA). A helical membrane pass occupies residues 272–292 (SAARVALGITTVLTMTTINTH). Over 293–304 (LRETLPKIPYVK) the chain is Extracellular. Residues 305-328 (AIDMYLMGCFVFVFLALLEYAFVN) form a helical membrane-spanning segment. The Cytoplasmic portion of the chain corresponds to 329–447 (YIFFGRGPQR…KIPDLTDVNA (119 aa)). Residues 448–470 (IDRWSRIVFPFTFSLFNLVYWLY) traverse the membrane as a helical segment. Over 471–473 (YVN) the chain is Extracellular.

The protein belongs to the ligand-gated ion channel (TC 1.A.9) family. Gamma-aminobutyric acid receptor (TC 1.A.9.5) subfamily. GABRB3 sub-subfamily. Heteropentamer, formed by a combination of alpha (GABRA1-6), beta (GABRB1-3), gamma (GABRG1-3), delta (GABRD), epsilon (GABRE), rho (GABRR1-3), pi (GABRP) and theta (GABRQ) chains, each subunit exhibiting distinct physiological and pharmacological properties. Can form functional homopentamers (in vitro). Interacts with UBQLN1. May interact with KIF21B. Identified in a complex of 720 kDa composed of LHFPL4, NLGN2, GABRA1, GABRB2, GABRG2 and GABRB3. Interacts with LHFPL4. Interacts with GIT1; this interaction is required for synaptic GABRB3 surface stability and inhibitory synapse strength.

It localises to the postsynaptic cell membrane. The protein localises to the cell membrane. The protein resides in the cytoplasmic vesicle membrane. The enzyme catalyses chloride(in) = chloride(out). Potentiated by histamine. Beta subunit of the heteropentameric ligand-gated chloride channel gated by gamma-aminobutyric acid (GABA), a major inhibitory neurotransmitter in the brain. GABA-gated chloride channels, also named GABA(A) receptors (GABAAR), consist of five subunits arranged around a central pore and contain GABA active binding site(s) located at the alpha and beta subunit interface(s). GABAARs containing beta-3/GABRB3 subunit are found at both synaptic and extrasynaptic sites. When activated by GABA, GABAARs selectively allow the flow of chloride anions across the cell membrane down their electrochemical gradient. Chloride influx into the postsynaptic neuron following GABAAR opening decreases the neuron ability to generate a new action potential, thereby reducing nerve transmission. GABAARs containing alpha-1 and beta-3 subunits exhibit synaptogenic activity; the gamma-2 subunit being necessary but not sufficient to induce rapid synaptic contacts formation. Extrasynaptic beta-3 receptors contribute to the tonic GABAergic inhibition. GABAARs containing alpha-1, beta-3 and epsilon subunits may permit spontaneous chloride channel activity while preserving the structural information required for GABA-gated openings. Beta-containing GABAARs can simultaneously bind GABA and histamine where histamine binds at the interface of two neighboring beta subunits, which may be involved in the regulation of sleep and wakefulness. Plays an important role in somatosensation and in the production of antinociception. The sequence is that of Gamma-aminobutyric acid receptor subunit beta-3 from Mus musculus (Mouse).